A 206-amino-acid polypeptide reads, in one-letter code: Ribosomal RNA large subunit methyltransferase E (206 aa).

5 residues coordinate S-adenosyl-L-methionine: G54, W56, D76, D94, and D118. K158 acts as the Proton acceptor in catalysis.

This sequence belongs to the class I-like SAM-binding methyltransferase superfamily. RNA methyltransferase RlmE family.

It is found in the cytoplasm. The catalysed reaction is uridine(2552) in 23S rRNA + S-adenosyl-L-methionine = 2'-O-methyluridine(2552) in 23S rRNA + S-adenosyl-L-homocysteine + H(+). Functionally, specifically methylates the uridine in position 2552 of 23S rRNA at the 2'-O position of the ribose in the fully assembled 50S ribosomal subunit. The polypeptide is Ribosomal RNA large subunit methyltransferase E (Methanosphaera stadtmanae (strain ATCC 43021 / DSM 3091 / JCM 11832 / MCB-3)).